We begin with the raw amino-acid sequence, 598 residues long: Proline--tRNA ligase (598 aa).

It belongs to the class-II aminoacyl-tRNA synthetase family. ProS type 1 subfamily. Homodimer.

It localises to the cytoplasm. It carries out the reaction tRNA(Pro) + L-proline + ATP = L-prolyl-tRNA(Pro) + AMP + diphosphate. Functionally, catalyzes the attachment of proline to tRNA(Pro) in a two-step reaction: proline is first activated by ATP to form Pro-AMP and then transferred to the acceptor end of tRNA(Pro). As ProRS can inadvertently accommodate and process non-cognate amino acids such as alanine and cysteine, to avoid such errors it has two additional distinct editing activities against alanine. One activity is designated as 'pretransfer' editing and involves the tRNA(Pro)-independent hydrolysis of activated Ala-AMP. The other activity is designated 'posttransfer' editing and involves deacylation of mischarged Ala-tRNA(Pro). The misacylated Cys-tRNA(Pro) is not edited by ProRS. This Synechococcus sp. (strain CC9311) protein is Proline--tRNA ligase.